The chain runs to 693 residues: Elongation factor G (693 aa).

Positions 8-282 (EKTRNIGIMA…AVVDYLPSPL (275 aa)) constitute a tr-type G domain. Residues 17 to 24 (AHVDAGKT), 81 to 85 (DTPGH), and 135 to 138 (NKMD) contribute to the GTP site.

This sequence belongs to the TRAFAC class translation factor GTPase superfamily. Classic translation factor GTPase family. EF-G/EF-2 subfamily.

It is found in the cytoplasm. Catalyzes the GTP-dependent ribosomal translocation step during translation elongation. During this step, the ribosome changes from the pre-translocational (PRE) to the post-translocational (POST) state as the newly formed A-site-bound peptidyl-tRNA and P-site-bound deacylated tRNA move to the P and E sites, respectively. Catalyzes the coordinated movement of the two tRNA molecules, the mRNA and conformational changes in the ribosome. The protein is Elongation factor G of Streptococcus mutans serotype c (strain ATCC 700610 / UA159).